The following is a 172-amino-acid chain: MSKDMNVNEKIRAREVRLIDSNGDQLGVKSRQEALDIATTRNLDLVLVAPNAKPPVCRIMDYGKYRFEQQKKEKEARKKQKVINVKEVRFTPGIGDHDFETKLKNARKFLEKGDKVKAAVRFRGRAITHKELGREVLDRFAEEVKDLGTIETKPKMEGRNMFMMVAPINEKN.

The protein belongs to the IF-3 family. Monomer.

The protein resides in the cytoplasm. IF-3 binds to the 30S ribosomal subunit and shifts the equilibrium between 70S ribosomes and their 50S and 30S subunits in favor of the free subunits, thus enhancing the availability of 30S subunits on which protein synthesis initiation begins. The sequence is that of Translation initiation factor IF-3 from Oceanobacillus iheyensis (strain DSM 14371 / CIP 107618 / JCM 11309 / KCTC 3954 / HTE831).